The primary structure comprises 155 residues: Small ribosomal subunit protein uS7c (155 aa).

Belongs to the universal ribosomal protein uS7 family. In terms of assembly, part of the 30S ribosomal subunit.

It localises to the plastid. The protein localises to the chloroplast. In terms of biological role, one of the primary rRNA binding proteins, it binds directly to 16S rRNA where it nucleates assembly of the head domain of the 30S subunit. This Canella winterana (Wild cinnamon) protein is Small ribosomal subunit protein uS7c (rps7).